The sequence spans 141 residues: 6,7-dimethyl-8-ribityllumazine synthase (141 aa).

5-amino-6-(D-ribitylamino)uracil contacts are provided by residues Phe14, 46–48, and 70–72; these read VFD and CVI. 75-76 lines the (2S)-2-hydroxy-3-oxobutyl phosphate pocket; that stretch reads ET. His78 (proton donor) is an active-site residue. Leu103 contacts 5-amino-6-(D-ribitylamino)uracil. Residue Arg118 coordinates (2S)-2-hydroxy-3-oxobutyl phosphate.

As to quaternary structure, forms an icosahedral capsid composed of 60 subunits, arranged as a dodecamer of pentamers.

It carries out the reaction (2S)-2-hydroxy-3-oxobutyl phosphate + 5-amino-6-(D-ribitylamino)uracil = 6,7-dimethyl-8-(1-D-ribityl)lumazine + phosphate + 2 H2O + H(+). The protein operates within cofactor biosynthesis; riboflavin biosynthesis; riboflavin from 2-hydroxy-3-oxobutyl phosphate and 5-amino-6-(D-ribitylamino)uracil: step 1/2. Its function is as follows. Catalyzes the formation of 6,7-dimethyl-8-ribityllumazine by condensation of 5-amino-6-(D-ribitylamino)uracil with 3,4-dihydroxy-2-butanone 4-phosphate. This is the penultimate step in the biosynthesis of riboflavin. The protein is 6,7-dimethyl-8-ribityllumazine synthase (ribH) of Methanocaldococcus jannaschii (strain ATCC 43067 / DSM 2661 / JAL-1 / JCM 10045 / NBRC 100440) (Methanococcus jannaschii).